The primary structure comprises 208 residues: High frequency lysogenization protein HflD homolog (208 aa).

This sequence belongs to the HflD family.

The protein localises to the cytoplasm. It is found in the cell inner membrane. The chain is High frequency lysogenization protein HflD homolog from Photorhabdus laumondii subsp. laumondii (strain DSM 15139 / CIP 105565 / TT01) (Photorhabdus luminescens subsp. laumondii).